We begin with the raw amino-acid sequence, 435 residues long: 26S proteasome regulatory subunit 7 (435 aa).

Over residues 1 to 23 the composition is skewed to basic and acidic residues; sequence MPDHLGDDMRKTKKDDTKEEEKN. The tract at residues 1-24 is disordered; sequence MPDHLGDDMRKTKKDDTKEEEKNF. 218 to 225 is an ATP binding site; it reads GPPGTGKT.

This sequence belongs to the AAA ATPase family.

The protein localises to the cytoplasm. It is found in the nucleus. Its function is as follows. The 26S proteasome is involved in the ATP-dependent degradation of ubiquitinated proteins. The regulatory (or ATPase) complex confers ATP dependency and substrate specificity to the 26S complex. This is 26S proteasome regulatory subunit 7 (rpt-1) from Caenorhabditis elegans.